The primary structure comprises 273 residues: Karrikin insensitive 2 receptor B (273 aa).

The Nucleophile role is filled by Ser-95. Asp-217 is a catalytic residue.

Belongs to the AB hydrolase superfamily. Expressed in stigma.

Its subcellular location is the nucleus. It is found in the cytoplasm. In terms of biological role, may be involved in plant olfaction during volatile communication. The polypeptide is Karrikin insensitive 2 receptor B (Petunia hybrida (Petunia)).